The sequence spans 310 residues: Pantothenate kinase (310 aa).

Residue 95–102 (GSVAVGKS) participates in ATP binding.

It belongs to the prokaryotic pantothenate kinase family.

The protein localises to the cytoplasm. The enzyme catalyses (R)-pantothenate + ATP = (R)-4'-phosphopantothenate + ADP + H(+). The protein operates within cofactor biosynthesis; coenzyme A biosynthesis; CoA from (R)-pantothenate: step 1/5. This chain is Pantothenate kinase, found in Rhodococcus jostii (strain RHA1).